A 310-amino-acid chain; its full sequence is Manganese ABC transporter substrate-binding lipoprotein scaA (310 aa).

Residues 1–19 form the signal peptide; sequence MKKCRFLVLLLLAFVGLAA. Residue Cys20 is the site of N-palmitoyl cysteine attachment. Residue Cys20 is the site of S-diacylglycerol cysteine attachment. Mn(2+) is bound by residues His68, His140, Glu206, and Asp281.

This sequence belongs to the bacterial solute-binding protein 9 family. Lipoprotein receptor antigen (Lrai) subfamily. As to quaternary structure, the complex is composed of two ATP-binding proteins (ScaC), two transmembrane proteins (ScaB) and a solute-binding protein (ScaA).

Its subcellular location is the cell membrane. Its function is as follows. Part of ATP-binding cassette (ABC) transport system ScaABC involved in manganese import. Essential for growth under Mn(2+)-limiting conditions. Also acts as an adhesin which is involved on adherence to extracellular matrix. It is an important factor in pathogenesis and infection. The protein is Manganese ABC transporter substrate-binding lipoprotein scaA of Streptococcus gordonii.